A 577-amino-acid polypeptide reads, in one-letter code: Sulfite reductase [NADPH] hemoprotein beta-component (577 aa).

4 residues coordinate [4Fe-4S] cluster: Cys441, Cys447, Cys486, and Cys490. Position 490 (Cys490) interacts with siroheme.

Belongs to the nitrite and sulfite reductase 4Fe-4S domain family. Alpha(8)-beta(8). The alpha component is a flavoprotein, the beta component is a hemoprotein. The cofactor is siroheme. [4Fe-4S] cluster is required as a cofactor.

It carries out the reaction hydrogen sulfide + 3 NADP(+) + 3 H2O = sulfite + 3 NADPH + 4 H(+). The protein operates within sulfur metabolism; hydrogen sulfide biosynthesis; hydrogen sulfide from sulfite (NADPH route): step 1/1. Functionally, component of the sulfite reductase complex that catalyzes the 6-electron reduction of sulfite to sulfide. This is one of several activities required for the biosynthesis of L-cysteine from sulfate. This Pectobacterium atrosepticum (strain SCRI 1043 / ATCC BAA-672) (Erwinia carotovora subsp. atroseptica) protein is Sulfite reductase [NADPH] hemoprotein beta-component.